The primary structure comprises 98 residues: Integration host factor subunit beta (98 aa).

It belongs to the bacterial histone-like protein family. Heterodimer of an alpha and a beta chain.

This protein is one of the two subunits of integration host factor, a specific DNA-binding protein that functions in genetic recombination as well as in transcriptional and translational control. In Hahella chejuensis (strain KCTC 2396), this protein is Integration host factor subunit beta.